The primary structure comprises 575 residues: Phosphoenolpyruvate-protein phosphotransferase (575 aa).

Tyr-122 is subject to Phosphotyrosine. His-189 acts as the Tele-phosphohistidine intermediate in catalysis. Arg-296 and Arg-332 together coordinate phosphoenolpyruvate. Residues Glu-431 and Asp-455 each coordinate Mg(2+). Phosphoenolpyruvate-binding positions include 454–455 and Arg-465; that span reads ND. The active-site Proton donor is the Cys-502.

This sequence belongs to the PEP-utilizing enzyme family. Homodimer. Interacts with the pole-localizer protein TmaR. Binding to TmaR is reversible as long as TmaR can get phosphorylated, whereas binding to non-phosphorylated TmaR is very strong and shifts the equilibrium toward binding. Mg(2+) serves as cofactor. Phosphorylated on Tyr-122. Phosphorylation on Tyr-122 is important for polar localization but not for interaction with TmaR and for activity.

Its subcellular location is the cytoplasm. It catalyses the reaction L-histidyl-[protein] + phosphoenolpyruvate = N(pros)-phospho-L-histidyl-[protein] + pyruvate. With respect to regulation, inhibited by oxalate. Functionally, general (non sugar-specific) component of the phosphoenolpyruvate-dependent sugar phosphotransferase system (sugar PTS). This major carbohydrate active-transport system catalyzes the phosphorylation of incoming sugar substrates concomitantly with their translocation across the cell membrane. Enzyme I transfers the phosphoryl group from phosphoenolpyruvate (PEP) to the phosphoryl carrier protein (HPr). Can also use (Z)-3-fluoro-PEP (ZFPEP), (Z)-3-methyl-PEP (ZMePEP), (Z)-3-chloro-PEP (ZClPEP) and (E)-3-chloro-PEP (EClPEP) as alternative phosphoryl donors. This chain is Phosphoenolpyruvate-protein phosphotransferase, found in Escherichia coli (strain K12).